The following is a 401-amino-acid chain: L-rhamnonate dehydratase (401 aa).

Residues H29 and R55 each contribute to the substrate site. Residues D222, E248, and E276 each coordinate Mg(2+). H325 serves as the catalytic Proton acceptor. E345 contributes to the substrate binding site.

The protein belongs to the mandelate racemase/muconate lactonizing enzyme family. RhamD subfamily. In terms of assembly, homooctamer; tetramer of dimers. The cofactor is Mg(2+).

It catalyses the reaction L-rhamnonate = 2-dehydro-3-deoxy-L-rhamnonate + H2O. Its function is as follows. Catalyzes the dehydration of L-rhamnonate to 2-keto-3-deoxy-L-rhamnonate (KDR). This chain is L-rhamnonate dehydratase, found in Salmonella schwarzengrund (strain CVM19633).